The chain runs to 220 residues: Ras-related protein Rab-1 (220 aa).

14 to 21 (GDSGTGKS) is a binding site for GTP. An Effector region motif is present at residues 36–44 (YMSTIGVDF). Residues 62 to 66 (DTAGQ) and 121 to 124 (NKID) contribute to the GTP site. Cysteine 219 carries the S-geranylgeranyl cysteine lipid modification.

Belongs to the small GTPase superfamily. Rab family.

It is found in the cell membrane. In terms of biological role, protein transport. Probably involved in vesicular traffic from ER to Golgi. The chain is Ras-related protein Rab-1 (rab1) from Theileria annulata.